We begin with the raw amino-acid sequence, 274 residues long: Ribosomal RNA small subunit methyltransferase A (274 aa).

S-adenosyl-L-methionine contacts are provided by Asn26, Leu28, Gly53, Glu74, Asp94, and Asn114.

Belongs to the class I-like SAM-binding methyltransferase superfamily. rRNA adenine N(6)-methyltransferase family. RsmA subfamily.

Its subcellular location is the cytoplasm. It catalyses the reaction adenosine(1518)/adenosine(1519) in 16S rRNA + 4 S-adenosyl-L-methionine = N(6)-dimethyladenosine(1518)/N(6)-dimethyladenosine(1519) in 16S rRNA + 4 S-adenosyl-L-homocysteine + 4 H(+). In terms of biological role, specifically dimethylates two adjacent adenosines (A1518 and A1519) in the loop of a conserved hairpin near the 3'-end of 16S rRNA in the 30S particle. May play a critical role in biogenesis of 30S subunits. This Bdellovibrio bacteriovorus (strain ATCC 15356 / DSM 50701 / NCIMB 9529 / HD100) protein is Ribosomal RNA small subunit methyltransferase A.